Consider the following 337-residue polypeptide: Protein LEG1 homolog (337 aa).

A signal peptide spans 1 to 20 (MAVLASWVWVLAGCFCAAVA). A glycan (N-linked (GlcNAc...) asparagine) is linked at Asn171.

The protein belongs to the LEG1 family.

It is found in the secreted. Its function is as follows. May be involved in early liver development. This is Protein LEG1 homolog from Mus musculus (Mouse).